The sequence spans 370 residues: Tomoregulin-1 (370 aa).

An N-terminal signal peptide occupies residues 1-36 (MDGLHPASWMLLLGSLAFWSASSLLLFSLALPGARA). Residues 37-320 (SNQLLSECHN…VPSRQKLTHV (284 aa)) lie on the Extracellular side of the membrane. N53 carries an N-linked (GlcNAc...) asparagine glycan. 2 consecutive Kazal-like domains span residues 88–135 (ICQF…PCFS) and 179–227 (VCNI…SCIE). Cystine bridges form between C89–C119, C93–C112, C101–C133, C180–C211, C184–C204, C193–C225, C265–C278, C273–C289, and C291–C300. Residues 261-301 (NYIPCSENYNGYCVHGKCELSYSSQKASCRCDSGYTGQYCD) form the EGF-like domain. The helical transmembrane segment at 321 to 341 (LIAAIIGAVQIAIIVAIVMCI) threads the bilayer. The Cytoplasmic portion of the chain corresponds to 342–370 (TRKCPKNNRGRRQKQNLGHFSSDTSSRMV). Positions 349–370 (NRGRRQKQNLGHFSSDTSSRMV) are disordered. The span at 356–370 (QNLGHFSSDTSSRMV) shows a compositional bias: polar residues.

Belongs to the tomoregulin family. Interacts with cripto. As to expression, expressed at highest levels in brain, and at lower levels in neuroendocrine tissues. Present in neurons from the diencephalon (at protein level).

It localises to the cell membrane. Its function is as follows. Inhibits nodal/nr-1 and bmp signaling during neural patterning through interaction with cripto. This chain is Tomoregulin-1 (tmeff1), found in Xenopus laevis (African clawed frog).